We begin with the raw amino-acid sequence, 127 residues long: Prefoldin subunit 6 (127 aa).

An N-acetylalanine modification is found at Ala-2. N6-acetyllysine is present on Lys-21. N6-acetyllysine; alternate is present on Lys-66. A Glycyl lysine isopeptide (Lys-Gly) (interchain with G-Cter in SUMO1); alternate cross-link involves residue Lys-66. A Glycyl lysine isopeptide (Lys-Gly) (interchain with G-Cter in SUMO2); alternate cross-link involves residue Lys-66.

It belongs to the prefoldin subunit beta family. Heterohexamer of two PFD-alpha type and four PFD-beta type subunits. Component of the PAQosome complex which is responsible for the biogenesis of several protein complexes and which consists of R2TP complex members RUVBL1, RUVBL2, RPAP3 and PIH1D1, URI complex members PFDN2, PFDN6, PDRG1, UXT and URI1 as well as ASDURF, POLR2E and DNAAF10/WDR92.

Binds specifically to cytosolic chaperonin (c-CPN) and transfers target proteins to it. Binds to nascent polypeptide chain and promotes folding in an environment in which there are many competing pathways for nonnative proteins. This is Prefoldin subunit 6 (Pfdn6) from Mus musculus (Mouse).